The chain runs to 227 residues: Small ribosomal subunit protein uS5 (227 aa).

The disordered stretch occupies residues 1–22 (MSKRSNRSNNKNNTNKFNIENW). The segment covering 7 to 18 (RSNNKNNTNKFN) has biased composition (low complexity). An S5 DRBM domain is found at 63–126 (LEEEVMDVNL…DAAKYNLIKV (64 aa)).

This sequence belongs to the universal ribosomal protein uS5 family. Part of the 30S ribosomal subunit. Contacts protein S4.

Functionally, with S4 and S12 plays an important role in translational accuracy. In Methanosphaera stadtmanae (strain ATCC 43021 / DSM 3091 / JCM 11832 / MCB-3), this protein is Small ribosomal subunit protein uS5.